The primary structure comprises 398 residues: MAPRGLLVLLLLALVGPCAALIRIPLTKFTSTRRMLTEVGSEIPDMNAITQFLKFKLGFADLAEPTPEILKNYMDAQYYGEIGIGTPPQKFTVVFDTGSSNLWVPSVHCHLLDIACLLHHKYDASKSSTYVENGTEFAIHYGTGSLSGFLSQDTVTLGNLKIKNQIFGEAVKQPGITFIAAKFDGILGMAFPRISVDKVTPFFDNVMQQKLIEKNIFSFYLNRDPTAQPGGELLLGGTDPKYYSGDFSWVNVTRKAYWQVHMDSVDVANGLTLCKGGCEAIVDTGTSLITGPTKEVKELQTAIGAKPLIKGQYVISCDKISSLPVVTLMLGGKPYQLTGEQYVFKVSAQGETICLSGFSGLDVPPPGGPLWILGDVFIGPYYTVFDRDNDSVGFAKCV.

Residues 1 to 20 (MAPRGLLVLLLLALVGPCAA) form the signal peptide. A propeptide spans 21–63 (LIRIPLTKFTSTRRMLTEVGSEIPDMNAITQFLKFKLGFADLA) (activation peptide). The Peptidase A1 domain occupies 78-395 (YYGEIGIGTP…DRDNDSVGFA (318 aa)). Asp-96 is an active-site residue. Residues Cys-109 and Cys-116 are joined by a disulfide bond. Residues Asn-133 and Asn-251 are each glycosylated (N-linked (GlcNAc...) asparagine). Cys-274 and Cys-278 are joined by a disulfide. Asp-283 is a catalytic residue. Cysteines 317 and 354 form a disulfide.

Belongs to the peptidase A1 family. Consists of a light chain and a heavy chain. Oocytic yolk, preovulatory follicles, liver.

The protein localises to the lysosome. The catalysed reaction is Specificity similar to, but narrower than, that of pepsin A. Does not cleave the 4-Gln-|-His-5 bond in B chain of insulin.. Acid protease active in intracellular protein breakdown. In chicken it is a key enzyme for yolk formation as it is capable of catalyzing intra oocytic break down of protein components of both vitellogenin and VLDL. The chain is Cathepsin D (CTSD) from Gallus gallus (Chicken).